The primary structure comprises 259 residues: Hydroxyethylthiazole kinase (259 aa).

Met38 serves as a coordination point for substrate. Residues Arg113 and Ser158 each coordinate ATP. Gly185 lines the substrate pocket.

This sequence belongs to the Thz kinase family. Requires Mg(2+) as cofactor.

It carries out the reaction 5-(2-hydroxyethyl)-4-methylthiazole + ATP = 4-methyl-5-(2-phosphooxyethyl)-thiazole + ADP + H(+). It participates in cofactor biosynthesis; thiamine diphosphate biosynthesis; 4-methyl-5-(2-phosphoethyl)-thiazole from 5-(2-hydroxyethyl)-4-methylthiazole: step 1/1. In terms of biological role, catalyzes the phosphorylation of the hydroxyl group of 4-methyl-5-beta-hydroxyethylthiazole (THZ). In Leuconostoc citreum (strain KM20), this protein is Hydroxyethylthiazole kinase.